The sequence spans 343 residues: S-adenosylmethionine:tRNA ribosyltransferase-isomerase (343 aa).

The protein belongs to the QueA family. Monomer.

Its subcellular location is the cytoplasm. The enzyme catalyses 7-aminomethyl-7-carbaguanosine(34) in tRNA + S-adenosyl-L-methionine = epoxyqueuosine(34) in tRNA + adenine + L-methionine + 2 H(+). It functions in the pathway tRNA modification; tRNA-queuosine biosynthesis. Functionally, transfers and isomerizes the ribose moiety from AdoMet to the 7-aminomethyl group of 7-deazaguanine (preQ1-tRNA) to give epoxyqueuosine (oQ-tRNA). This is S-adenosylmethionine:tRNA ribosyltransferase-isomerase from Geobacter sulfurreducens (strain ATCC 51573 / DSM 12127 / PCA).